Here is a 245-residue protein sequence, read N- to C-terminus: Biosynthetic peptidoglycan transglycosylase (245 aa).

The helical transmembrane segment at 20-42 (VYAGSVFAGAWLATQLFYLAQIA) threads the bilayer.

It belongs to the glycosyltransferase 51 family.

The protein localises to the cell inner membrane. It catalyses the reaction [GlcNAc-(1-&gt;4)-Mur2Ac(oyl-L-Ala-gamma-D-Glu-L-Lys-D-Ala-D-Ala)](n)-di-trans,octa-cis-undecaprenyl diphosphate + beta-D-GlcNAc-(1-&gt;4)-Mur2Ac(oyl-L-Ala-gamma-D-Glu-L-Lys-D-Ala-D-Ala)-di-trans,octa-cis-undecaprenyl diphosphate = [GlcNAc-(1-&gt;4)-Mur2Ac(oyl-L-Ala-gamma-D-Glu-L-Lys-D-Ala-D-Ala)](n+1)-di-trans,octa-cis-undecaprenyl diphosphate + di-trans,octa-cis-undecaprenyl diphosphate + H(+). Its pathway is cell wall biogenesis; peptidoglycan biosynthesis. In terms of biological role, peptidoglycan polymerase that catalyzes glycan chain elongation from lipid-linked precursors. The polypeptide is Biosynthetic peptidoglycan transglycosylase (Burkholderia lata (strain ATCC 17760 / DSM 23089 / LMG 22485 / NCIMB 9086 / R18194 / 383)).